A 399-amino-acid chain; its full sequence is Brefeldin A resistance protein (399 aa).

Basic and acidic residues-rich tracts occupy residues 1 to 31 (MTSK…DETS), 49 to 69 (SKSE…KETT), and 101 to 130 (KVEE…KESA). Disordered regions lie at residues 1–173 (MTSK…FGAF) and 191–269 (KKFA…SEII). The segment covering 138 to 157 (SPFSQFASFSNASSPFSNVS) has biased composition (low complexity). Composition is skewed to basic and acidic residues over residues 205 to 217 (SGKE…KSSE) and 241 to 252 (TKSEPKEADKGS). A compositionally biased stretch (polar residues) spans 253 to 263 (GDSTKSTMHQL). In terms of domain architecture, RanBD1 spans 256–396 (TKSTMHQLSD…VLEAIPKGGR (141 aa)).

Phosphorylated.

Its subcellular location is the nucleus. This is Brefeldin A resistance protein (hba1) from Schizosaccharomyces pombe (strain 972 / ATCC 24843) (Fission yeast).